Consider the following 84-residue polypeptide: Beta-defensin 119 (84 aa).

The signal sequence occupies residues 1-21; it reads MKLLYLFLAILLAIEEPVISG. Disulfide bonds link C28-C55, C35-C49, and C39-C56.

The protein belongs to the beta-defensin family.

The protein resides in the secreted. Its function is as follows. Has antibacterial activity. The chain is Beta-defensin 119 (DEFB119) from Hylobates lar (Lar gibbon).